We begin with the raw amino-acid sequence, 258 residues long: UPF0246 protein MS0374 (258 aa).

It belongs to the UPF0246 family.

This Mannheimia succiniciproducens (strain KCTC 0769BP / MBEL55E) protein is UPF0246 protein MS0374.